An 851-amino-acid chain; its full sequence is Alanine--tRNA ligase (851 aa).

Histidine 554, histidine 558, cysteine 656, and histidine 660 together coordinate Zn(2+).

The protein belongs to the class-II aminoacyl-tRNA synthetase family. It depends on Zn(2+) as a cofactor.

The protein resides in the cytoplasm. It carries out the reaction tRNA(Ala) + L-alanine + ATP = L-alanyl-tRNA(Ala) + AMP + diphosphate. In terms of biological role, catalyzes the attachment of alanine to tRNA(Ala) in a two-step reaction: alanine is first activated by ATP to form Ala-AMP and then transferred to the acceptor end of tRNA(Ala). Also edits incorrectly charged Ser-tRNA(Ala) and Gly-tRNA(Ala) via its editing domain. This is Alanine--tRNA ligase from Aliarcobacter butzleri (strain RM4018) (Arcobacter butzleri).